The following is an 860-amino-acid chain: Beta-glucosidase A (860 aa).

A signal peptide spans 1–19; it reads MRFTLIEAVALTAVSLASA. 3 N-linked (GlcNAc...) asparagine glycosylation sites follow: asparagine 61, asparagine 211, and asparagine 252. Aspartate 280 is a catalytic residue. Asparagine 315, asparagine 322, asparagine 354, asparagine 387, asparagine 442, asparagine 523, asparagine 542, asparagine 564, asparagine 658, asparagine 690, and asparagine 712 each carry an N-linked (GlcNAc...) asparagine glycan. Residues 719 to 753 are disordered; that stretch reads SSGDASYGQDSSDYLPEGATDGSAQPILPAGGGPG.

The protein belongs to the glycosyl hydrolase 3 family.

It localises to the secreted. The enzyme catalyses Hydrolysis of terminal, non-reducing beta-D-glucosyl residues with release of beta-D-glucose.. It functions in the pathway glycan metabolism; cellulose degradation. Its function is as follows. Beta-glucosidases are one of a number of cellulolytic enzymes involved in the degradation of cellulosic biomass. Catalyzes the last step releasing glucose from the inhibitory cellobiose. The sequence is that of Beta-glucosidase A (bglA) from Aspergillus kawachii (strain NBRC 4308) (White koji mold).